An 87-amino-acid chain; its full sequence is UPF0250 protein YbeD (87 aa).

This sequence belongs to the UPF0250 family.

This chain is UPF0250 protein YbeD, found in Shigella boydii serotype 18 (strain CDC 3083-94 / BS512).